The chain runs to 233 residues: Phosphatidylserine decarboxylase proenzyme (233 aa).

The Schiff-base intermediate with substrate; via pyruvic acid role is filled by Ser190. At Ser190 the chain carries Pyruvic acid (Ser); by autocatalysis.

It belongs to the phosphatidylserine decarboxylase family. PSD-A subfamily. As to quaternary structure, heterodimer of a large membrane-associated beta subunit and a small pyruvoyl-containing alpha subunit. Requires pyruvate as cofactor. In terms of processing, is synthesized initially as an inactive proenzyme. Formation of the active enzyme involves a self-maturation process in which the active site pyruvoyl group is generated from an internal serine residue via an autocatalytic post-translational modification. Two non-identical subunits are generated from the proenzyme in this reaction, and the pyruvate is formed at the N-terminus of the alpha chain, which is derived from the carboxyl end of the proenzyme. The post-translation cleavage follows an unusual pathway, termed non-hydrolytic serinolysis, in which the side chain hydroxyl group of the serine supplies its oxygen atom to form the C-terminus of the beta chain, while the remainder of the serine residue undergoes an oxidative deamination to produce ammonia and the pyruvoyl prosthetic group on the alpha chain.

The protein localises to the cell membrane. It carries out the reaction a 1,2-diacyl-sn-glycero-3-phospho-L-serine + H(+) = a 1,2-diacyl-sn-glycero-3-phosphoethanolamine + CO2. Its pathway is phospholipid metabolism; phosphatidylethanolamine biosynthesis; phosphatidylethanolamine from CDP-diacylglycerol: step 2/2. Functionally, catalyzes the formation of phosphatidylethanolamine (PtdEtn) from phosphatidylserine (PtdSer). In Bartonella quintana (strain Toulouse) (Rochalimaea quintana), this protein is Phosphatidylserine decarboxylase proenzyme.